Reading from the N-terminus, the 345-residue chain is MVLFKAKFSFQRRVKLAQTLWLLSWLSVLVGCLTFGMGIFLKVQLWIHNEVMENTSAHAVPNTVITAGLVGILLGIYAGKVSQASMDVTKYQRWKSFMMPFFFLAILSCLVCLAALVLSVALRGTLEESLKIGLKNAIRFYKDTDTPGRCYQKRSMDKLQMDFQCCGNNHPKDWFEVQWISNRYLDFSSKEVKDRIKSNVDGRYLMDSVPFSCCNPSSPRPCIQMQITNNSAHYSYNYQSDELNIWVRGCREALLSYYTGIMATNGAAVTLSFLLQASVLVSLRYLHTSMDKISGPDDMEADTEGFILEKGVTETMNTTLEKMKGLFMSNQVETAEGGGEAAAAS.

Over 1–24 (MVLFKAKFSFQRRVKLAQTLWLLS) the chain is Cytoplasmic. The chain crosses the membrane as a helical span at residues 25 to 43 (WLSVLVGCLTFGMGIFLKV). Residues 44-61 (QLWIHNEVMENTSAHAVP) are Lumenal-facing. A glycan (N-linked (GlcNAc...) asparagine) is linked at Asn54. The chain crosses the membrane as a helical span at residues 62–80 (NTVITAGLVGILLGIYAGK). The Cytoplasmic segment spans residues 81–99 (VSQASMDVTKYQRWKSFMM). A helical membrane pass occupies residues 100-123 (PFFFLAILSCLVCLAALVLSVALR). Over 124 to 264 (GTLEESLKIG…LSYYTGIMAT (141 aa)) the chain is Lumenal. The N-linked (GlcNAc...) asparagine glycan is linked to Asn229. The chain crosses the membrane as a helical span at residues 265 to 290 (NGAAVTLSFLLQASVLVSLRYLHTSM). At 291-345 (DKISGPDDMEADTEGFILEKGVTETMNTTLEKMKGLFMSNQVETAEGGGEAAAAS) the chain is on the cytoplasmic side.

The protein belongs to the PRPH2/ROM1 family. As to quaternary structure, homodimer; disulfide-linked. Rod specific.

It localises to the membrane. The sequence is that of RDS/peripherin-like protein xRDS35 (rds35) from Xenopus laevis (African clawed frog).